Consider the following 425-residue polypeptide: Multifunctional CCA protein (425 aa).

2 residues coordinate ATP: G8 and R11. Positions 8 and 11 each coordinate CTP. Mg(2+)-binding residues include E21 and D23. R91, R137, and R140 together coordinate ATP. The CTP site is built by R91, R137, and R140. Residues 228–329 (TGVHTLMVLD…VDLLDRLGAL (102 aa)) enclose the HD domain.

It belongs to the tRNA nucleotidyltransferase/poly(A) polymerase family. Bacterial CCA-adding enzyme type 1 subfamily. Monomer. Can also form homodimers and oligomers. Requires Mg(2+) as cofactor. The cofactor is Ni(2+).

The enzyme catalyses a tRNA precursor + 2 CTP + ATP = a tRNA with a 3' CCA end + 3 diphosphate. It carries out the reaction a tRNA with a 3' CCA end + 2 CTP + ATP = a tRNA with a 3' CCACCA end + 3 diphosphate. Catalyzes the addition and repair of the essential 3'-terminal CCA sequence in tRNAs without using a nucleic acid template. Adds these three nucleotides in the order of C, C, and A to the tRNA nucleotide-73, using CTP and ATP as substrates and producing inorganic pyrophosphate. tRNA 3'-terminal CCA addition is required both for tRNA processing and repair. Also involved in tRNA surveillance by mediating tandem CCA addition to generate a CCACCA at the 3' terminus of unstable tRNAs. While stable tRNAs receive only 3'-terminal CCA, unstable tRNAs are marked with CCACCA and rapidly degraded. The chain is Multifunctional CCA protein from Methylococcus capsulatus (strain ATCC 33009 / NCIMB 11132 / Bath).